A 260-amino-acid polypeptide reads, in one-letter code: Thiazole synthase (260 aa).

The active-site Schiff-base intermediate with DXP is Lys-96. 1-deoxy-D-xylulose 5-phosphate is bound by residues Gly-157, 184–185 (AG), and 206–207 (NT).

This sequence belongs to the ThiG family. In terms of assembly, homotetramer. Forms heterodimers with either ThiH or ThiS.

Its subcellular location is the cytoplasm. The catalysed reaction is [ThiS sulfur-carrier protein]-C-terminal-Gly-aminoethanethioate + 2-iminoacetate + 1-deoxy-D-xylulose 5-phosphate = [ThiS sulfur-carrier protein]-C-terminal Gly-Gly + 2-[(2R,5Z)-2-carboxy-4-methylthiazol-5(2H)-ylidene]ethyl phosphate + 2 H2O + H(+). The protein operates within cofactor biosynthesis; thiamine diphosphate biosynthesis. In terms of biological role, catalyzes the rearrangement of 1-deoxy-D-xylulose 5-phosphate (DXP) to produce the thiazole phosphate moiety of thiamine. Sulfur is provided by the thiocarboxylate moiety of the carrier protein ThiS. In vitro, sulfur can be provided by H(2)S. The polypeptide is Thiazole synthase (Bradyrhizobium sp. (strain ORS 278)).